Here is a 159-residue protein sequence, read N- to C-terminus: MYQVLKKKKPEVYALGQHISMSADKARRVIDQIRGRSYEETLMILELMPYRAGYPIFKLVYSAAANASYTMASNEANLVISKAEVNEGTTVKKFKPRARGRSYPIKRTTCHITIVLKDISLDDSESIELNLLKKPRWKKNSTAMAYYDLHNRGGLWDKK.

Belongs to the universal ribosomal protein uL22 family. In terms of assembly, part of the 50S ribosomal subunit.

It is found in the plastid. It localises to the chloroplast. Functionally, this protein binds specifically to 23S rRNA. In terms of biological role, the globular domain of the protein is located near the polypeptide exit tunnel on the outside of the subunit, while an extended beta-hairpin is found that lines the wall of the exit tunnel in the center of the 70S ribosome. The polypeptide is Large ribosomal subunit protein uL22c (rpl22) (Ipomoea purpurea (Common morning glory)).